A 508-amino-acid chain; its full sequence is Amphoterin-induced protein 3 (508 aa).

The N-terminal stretch at 1–19 (MAWLVLSGILLCMLGAGLG) is a signal peptide. The Extracellular segment spans residues 20–383 (TSDLEDVLPP…ARPEPETFNT (364 aa)). The 37-residue stretch at 25 to 61 (DVLPPAPHNCPDICICAADVLSCAGRGLQDLPVALPT) folds into the LRRNT domain. Disulfide bonds link Cys-34/Cys-40 and Cys-38/Cys-47. LRR repeat units follow at residues 62–83 (TAAE…WLAP), 86–107 (RLRA…AFTN), 110–133 (GLRT…DGLE), 134–155 (ELEK…AFQG), 158–178 (MLSH…NHLH), and 184–207 (RLRT…AALP). An N-linked (GlcNAc...) asparagine glycan is attached at Asn-107. N-linked (GlcNAc...) asparagine glycosylation occurs at Asn-142. The 57-residue stretch at 219 to 275 (NPLPCDCSLYHLLRRWHQRGLSALHDFEREYTCLVFKVSESRVRFFEHSRVFKNCSV) folds into the LRRCT domain. 3 cysteine pairs are disulfide-bonded: Cys-223-Cys-251, Cys-225-Cys-273, and Cys-300-Cys-352. N-linked (GlcNAc...) asparagine glycans are attached at residues Asn-272, Asn-301, Asn-362, and Asn-368. The region spanning 279–370 (PGLELPEEQL…HNQTLEYNVS (92 aa)) is the Ig-like C2-type domain. The chain crosses the membrane as a helical span at residues 384-404 (GFTTLLGCIVGLVLVLLYLFA). The Cytoplasmic portion of the chain corresponds to 405-508 (PPCRGCCHCC…STGSEGLVMS (104 aa)).

The protein belongs to the immunoglobulin superfamily. AMIGO family. In terms of assembly, binds AMIGO1 or AMIGO2. Ubiquitous.

It localises to the membrane. Functionally, may mediate heterophilic cell-cell interaction. May contribute to signal transduction through its intracellular domain. This is Amphoterin-induced protein 3 from Mus musculus (Mouse).